A 250-amino-acid polypeptide reads, in one-letter code: Intermembrane phospholipid transport system lipoprotein MlaA (250 aa).

The N-terminal stretch at 1–18 (MKTKTILTALLSAIALTG) is a signal peptide. The N-palmitoyl cysteine moiety is linked to residue Cys19. A lipid anchor (S-diacylglycerol cysteine) is attached at Cys19.

Belongs to the MlaA family.

It is found in the cell outer membrane. Its function is as follows. Involved in a phospholipid transport pathway that maintains lipid asymmetry in the outer membrane by retrograde trafficking of phospholipids from the outer membrane to the inner membrane. This is Intermembrane phospholipid transport system lipoprotein MlaA from Haemophilus influenzae (strain ATCC 51907 / DSM 11121 / KW20 / Rd).